Consider the following 406-residue polypeptide: tRNA-specific 2-thiouridylase MnmA (406 aa).

ATP is bound by residues 42-49 (GLSGGVDS) and L68. C129 serves as the catalytic Nucleophile. Residues C129 and C239 are joined by a disulfide bond. Residue G154 coordinates ATP. Positions 189–191 (KDQ) are interaction with tRNA. C239 acts as the Cysteine persulfide intermediate in catalysis. An interaction with tRNA region spans residues 344-345 (RY).

The protein belongs to the MnmA/TRMU family.

It is found in the cytoplasm. The enzyme catalyses S-sulfanyl-L-cysteinyl-[protein] + uridine(34) in tRNA + AH2 + ATP = 2-thiouridine(34) in tRNA + L-cysteinyl-[protein] + A + AMP + diphosphate + H(+). Functionally, catalyzes the 2-thiolation of uridine at the wobble position (U34) of tRNA, leading to the formation of s(2)U34. The polypeptide is tRNA-specific 2-thiouridylase MnmA (Prochlorococcus marinus (strain SARG / CCMP1375 / SS120)).